Consider the following 306-residue polypeptide: Choline-binding protein (306 aa).

Residues 1–22 form the signal peptide; it reads MKRKYLKLMIGLALAATLTLSG. Cys23 carries N-palmitoyl cysteine lipidation. A lipid anchor (S-diacylglycerol cysteine) is attached at Cys23.

This sequence belongs to the OsmX family.

Its subcellular location is the cell membrane. Its function is as follows. Member of a high affinity multicomponent binding-protein-dependent transport system for choline. This chain is Choline-binding protein (opuBC), found in Bacillus subtilis (strain 168).